The sequence spans 81 residues: Photosystem I iron-sulfur center (81 aa).

2 4Fe-4S ferredoxin-type domains span residues 2-31 (SHSV…MIPW) and 39-68 (IASA…VRVY). [4Fe-4S] cluster contacts are provided by C11, C14, C17, C21, C48, C51, C54, and C58.

As to quaternary structure, the eukaryotic PSI reaction center is composed of at least 11 subunits. Requires [4Fe-4S] cluster as cofactor.

The protein resides in the plastid. It localises to the chloroplast thylakoid membrane. It catalyses the reaction reduced [plastocyanin] + hnu + oxidized [2Fe-2S]-[ferredoxin] = oxidized [plastocyanin] + reduced [2Fe-2S]-[ferredoxin]. Its function is as follows. Apoprotein for the two 4Fe-4S centers FA and FB of photosystem I (PSI); essential for photochemical activity. FB is the terminal electron acceptor of PSI, donating electrons to ferredoxin. The C-terminus interacts with PsaA/B/D and helps assemble the protein into the PSI complex. Required for binding of PsaD and PsaE to PSI. PSI is a plastocyanin-ferredoxin oxidoreductase, converting photonic excitation into a charge separation, which transfers an electron from the donor P700 chlorophyll pair to the spectroscopically characterized acceptors A0, A1, FX, FA and FB in turn. This Phaseolus vulgaris (Kidney bean) protein is Photosystem I iron-sulfur center.